The primary structure comprises 107 residues: Phosphoribosyl-ATP pyrophosphatase (107 aa).

The protein belongs to the PRA-PH family.

It is found in the cytoplasm. It carries out the reaction 1-(5-phospho-beta-D-ribosyl)-ATP + H2O = 1-(5-phospho-beta-D-ribosyl)-5'-AMP + diphosphate + H(+). Its pathway is amino-acid biosynthesis; L-histidine biosynthesis; L-histidine from 5-phospho-alpha-D-ribose 1-diphosphate: step 2/9. The sequence is that of Phosphoribosyl-ATP pyrophosphatase from Novosphingobium aromaticivorans (strain ATCC 700278 / DSM 12444 / CCUG 56034 / CIP 105152 / NBRC 16084 / F199).